We begin with the raw amino-acid sequence, 285 residues long: HTH-type transcriptional regulator HexR (285 aa).

The HTH rpiR-type domain occupies 2-78 (KNLLEQIQSR…IQLAQSLASG (77 aa)). A DNA-binding region (H-T-H motif) is located at residues 38 to 57 (IAALAQAAAVSEPTVNRFCR). Positions 122–261 (AVDLLIQARQ…ATGVTLRRGV (140 aa)) constitute an SIS domain.

Functionally, involved in regulation of glucose metabolism. Transcriptional repressor of the gap-1 gene and of the edd-glk-gltR-2 and zwf-pgl-eda operons. Acts by binding directly to an inverted pseudopalindromic sequence in the promoter region. This chain is HTH-type transcriptional regulator HexR, found in Pseudomonas aeruginosa (strain ATCC 15692 / DSM 22644 / CIP 104116 / JCM 14847 / LMG 12228 / 1C / PRS 101 / PAO1).